Here is a 120-residue protein sequence, read N- to C-terminus: Large ribosomal subunit protein eL8 (120 aa).

Belongs to the eukaryotic ribosomal protein eL8 family. As to quaternary structure, part of the 50S ribosomal subunit. Probably part of the RNase P complex.

It is found in the cytoplasm. In terms of biological role, multifunctional RNA-binding protein that recognizes the K-turn motif in ribosomal RNA, the RNA component of RNase P, box H/ACA, box C/D and box C'/D' sRNAs. This Halorubrum lacusprofundi (strain ATCC 49239 / DSM 5036 / JCM 8891 / ACAM 34) protein is Large ribosomal subunit protein eL8.